A 91-amino-acid chain; its full sequence is HssA/B-like protein 24 (91 aa).

This sequence belongs to the hssA/B family.

The sequence is that of HssA/B-like protein 24 (hssl24) from Dictyostelium discoideum (Social amoeba).